A 557-amino-acid chain; its full sequence is Dihydroxy-acid dehydratase (557 aa).

Cys50 lines the [2Fe-2S] cluster pocket. Mg(2+) is bound at residue Asp82. Cys123 is a [2Fe-2S] cluster binding site. Mg(2+)-binding residues include Asp124 and Lys125. Residue Lys125 is modified to N6-carboxylysine. Cys195 is a [2Fe-2S] cluster binding site. Mg(2+) is bound at residue Glu447. Ser473 acts as the Proton acceptor in catalysis.

It belongs to the IlvD/Edd family. Homodimer. It depends on [2Fe-2S] cluster as a cofactor. Requires Mg(2+) as cofactor.

The enzyme catalyses (2R)-2,3-dihydroxy-3-methylbutanoate = 3-methyl-2-oxobutanoate + H2O. The catalysed reaction is (2R,3R)-2,3-dihydroxy-3-methylpentanoate = (S)-3-methyl-2-oxopentanoate + H2O. It functions in the pathway amino-acid biosynthesis; L-isoleucine biosynthesis; L-isoleucine from 2-oxobutanoate: step 3/4. The protein operates within amino-acid biosynthesis; L-valine biosynthesis; L-valine from pyruvate: step 3/4. Functions in the biosynthesis of branched-chain amino acids. Catalyzes the dehydration of (2R,3R)-2,3-dihydroxy-3-methylpentanoate (2,3-dihydroxy-3-methylvalerate) into 2-oxo-3-methylpentanoate (2-oxo-3-methylvalerate) and of (2R)-2,3-dihydroxy-3-methylbutanoate (2,3-dihydroxyisovalerate) into 2-oxo-3-methylbutanoate (2-oxoisovalerate), the penultimate precursor to L-isoleucine and L-valine, respectively. This Burkholderia thailandensis (strain ATCC 700388 / DSM 13276 / CCUG 48851 / CIP 106301 / E264) protein is Dihydroxy-acid dehydratase.